We begin with the raw amino-acid sequence, 323 residues long: tRNA-dihydrouridine(16) synthase (323 aa).

Residues 7 to 9 (PME) and Gln-68 each bind FMN. The active-site Proton donor is the Cys-98. FMN-binding positions include Lys-139, 200–202 (NGE), and 224–225 (CR).

Belongs to the Dus family. DusC subfamily. FMN is required as a cofactor.

It carries out the reaction 5,6-dihydrouridine(16) in tRNA + NADP(+) = uridine(16) in tRNA + NADPH + H(+). The catalysed reaction is 5,6-dihydrouridine(16) in tRNA + NAD(+) = uridine(16) in tRNA + NADH + H(+). Catalyzes the synthesis of 5,6-dihydrouridine (D), a modified base found in the D-loop of most tRNAs, via the reduction of the C5-C6 double bond in target uridines. Specifically modifies U16 in tRNAs. In Vibrio cholerae serotype O1 (strain ATCC 39315 / El Tor Inaba N16961), this protein is tRNA-dihydrouridine(16) synthase.